Reading from the N-terminus, the 257-residue chain is Phosphate import ATP-binding protein PstB (257 aa).

Positions 11–252 constitute an ABC transporter domain; it reads FNISRLYLYI…PKNELTEKYV (242 aa). 43–50 provides a ligand contact to ATP; sequence GPSGSGKS.

The protein belongs to the ABC transporter superfamily. Phosphate importer (TC 3.A.1.7) family. As to quaternary structure, the complex is composed of two ATP-binding proteins (PstB), two transmembrane proteins (PstC and PstA) and a solute-binding protein (PstS).

It is found in the cell membrane. It catalyses the reaction phosphate(out) + ATP + H2O = ADP + 2 phosphate(in) + H(+). Functionally, part of the ABC transporter complex PstSACB involved in phosphate import. Responsible for energy coupling to the transport system. The polypeptide is Phosphate import ATP-binding protein PstB (Saccharolobus solfataricus (strain ATCC 35092 / DSM 1617 / JCM 11322 / P2) (Sulfolobus solfataricus)).